Consider the following 359-residue polypeptide: tRNA N6-adenosine threonylcarbamoyltransferase (359 aa).

2 residues coordinate Fe cation: histidine 115 and histidine 119. Residues 137 to 141 (LVSGG), aspartate 170, glycine 183, and asparagine 283 contribute to the substrate site. Aspartate 311 contacts Fe cation. Positions 328–359 (APDSLDIAPRSRWPLDEKSAPVFGTGRRGAKA) are disordered.

The protein belongs to the KAE1 / TsaD family. Fe(2+) serves as cofactor.

The protein localises to the cytoplasm. It catalyses the reaction L-threonylcarbamoyladenylate + adenosine(37) in tRNA = N(6)-L-threonylcarbamoyladenosine(37) in tRNA + AMP + H(+). Functionally, required for the formation of a threonylcarbamoyl group on adenosine at position 37 (t(6)A37) in tRNAs that read codons beginning with adenine. Is involved in the transfer of the threonylcarbamoyl moiety of threonylcarbamoyl-AMP (TC-AMP) to the N6 group of A37, together with TsaE and TsaB. TsaD likely plays a direct catalytic role in this reaction. In Brucella suis (strain ATCC 23445 / NCTC 10510), this protein is tRNA N6-adenosine threonylcarbamoyltransferase.